Here is a 288-residue protein sequence, read N- to C-terminus: Homeobox protein Hox-B4a (288 aa).

Residues 10 to 136 (SNYVDPKFPP…ASSPASTRKD (127 aa)) form a disordered region. The segment covering 118–132 (CGQTPHSQGASSPAS) has biased composition (polar residues). The short motif at 139–144 (VYPWMK) is the Antp-type hexapeptide element. The segment at residues 160–219 (PKRSRTAYTRQQVLELEKEFHYNRYLTRRRRVEIAHTLCLSERQIKIWFQNRRMKWKKDH) is a DNA-binding region (homeobox).

It belongs to the Antp homeobox family. Deformed subfamily.

It localises to the nucleus. In terms of biological role, sequence-specific transcription factor which is part of a developmental regulatory system that provides cells with specific positional identities on the anterior-posterior axis. This chain is Homeobox protein Hox-B4a (hoxb4a), found in Takifugu rubripes (Japanese pufferfish).